We begin with the raw amino-acid sequence, 432 residues long: Trigger factor (432 aa).

Residues 161 to 246 (EDRVTIDFTG…LKKVEERGLP (86 aa)) enclose the PPIase FKBP-type domain.

This sequence belongs to the FKBP-type PPIase family. Tig subfamily.

The protein localises to the cytoplasm. It carries out the reaction [protein]-peptidylproline (omega=180) = [protein]-peptidylproline (omega=0). Its function is as follows. Involved in protein export. Acts as a chaperone by maintaining the newly synthesized protein in an open conformation. Functions as a peptidyl-prolyl cis-trans isomerase. The protein is Trigger factor of Salmonella choleraesuis (strain SC-B67).